We begin with the raw amino-acid sequence, 337 residues long: tRNA N6-adenosine threonylcarbamoyltransferase (337 aa).

2 residues coordinate Fe cation: His114 and His118. Substrate is bound by residues 136 to 140, Asp169, Gly182, Asp186, and Asn275; that span reads LVSGG. Asp301 serves as a coordination point for Fe cation.

Belongs to the KAE1 / TsaD family. It depends on Fe(2+) as a cofactor.

It localises to the cytoplasm. It catalyses the reaction L-threonylcarbamoyladenylate + adenosine(37) in tRNA = N(6)-L-threonylcarbamoyladenosine(37) in tRNA + AMP + H(+). In terms of biological role, required for the formation of a threonylcarbamoyl group on adenosine at position 37 (t(6)A37) in tRNAs that read codons beginning with adenine. Is involved in the transfer of the threonylcarbamoyl moiety of threonylcarbamoyl-AMP (TC-AMP) to the N6 group of A37, together with TsaE and TsaB. TsaD likely plays a direct catalytic role in this reaction. The sequence is that of tRNA N6-adenosine threonylcarbamoyltransferase from Streptococcus thermophilus (strain CNRZ 1066).